Here is a 243-residue protein sequence, read N- to C-terminus: Secreted RxLR effector protein 28 (243 aa).

The first 26 residues, Met-1–Ala-26, serve as a signal peptide directing secretion. The short motif at Arg-49–Arg-52 is the RxLR element. The disordered stretch occupies residues Asn-187 to Glu-243. Residues Ser-199–Gly-216 show a composition bias toward low complexity.

Belongs to the RxLR effector family.

The protein localises to the secreted. Its subcellular location is the host cytoplasm. It is found in the host nucleus. Functionally, effector that significantly enhances susceptibilities of grapevine and tobacco to pathogens. Acts as a broad suppressor of cell death to interrupt plant immunity. Completely inhibits cell death induced by cell death-inducing proteins, including the PAMP elicitor INF1 from P.infestans. Reduces the transcriptional levels of the defense-related genes and impairs the H(2)O(2) accumulation in N.benthamiana. The chain is Secreted RxLR effector protein 28 from Plasmopara viticola (Downy mildew of grapevine).